We begin with the raw amino-acid sequence, 261 residues long: tRNA pseudouridine synthase A (261 aa).

D51 functions as the Nucleophile in the catalytic mechanism. Y109 serves as a coordination point for substrate.

Belongs to the tRNA pseudouridine synthase TruA family. In terms of assembly, homodimer.

It catalyses the reaction uridine(38/39/40) in tRNA = pseudouridine(38/39/40) in tRNA. Its function is as follows. Formation of pseudouridine at positions 38, 39 and 40 in the anticodon stem and loop of transfer RNAs. The chain is tRNA pseudouridine synthase A from Shewanella piezotolerans (strain WP3 / JCM 13877).